The sequence spans 318 residues: L-lactate dehydrogenase (318 aa).

Residues Val18, Asp39, Lys44, Tyr69, and 83–84 (GA) contribute to the NAD(+) site. Gln86 and Arg92 together coordinate substrate. NAD(+)-binding positions include Ser105, 122–124 (VSN), and Ser147. 124 to 127 (NPVD) provides a ligand contact to substrate. 152-155 (DTSR) lines the substrate pocket. His179 (proton acceptor) is an active-site residue. The residue at position 225 (Tyr225) is a Phosphotyrosine. Thr234 lines the substrate pocket.

It belongs to the LDH/MDH superfamily. LDH family. Homotetramer.

The protein resides in the cytoplasm. The enzyme catalyses (S)-lactate + NAD(+) = pyruvate + NADH + H(+). The protein operates within fermentation; pyruvate fermentation to lactate; (S)-lactate from pyruvate: step 1/1. Functionally, catalyzes the conversion of lactate to pyruvate. This chain is L-lactate dehydrogenase, found in Clostridium botulinum (strain Okra / Type B1).